A 101-amino-acid polypeptide reads, in one-letter code: Small ribosomal subunit protein bS18c (101 aa).

Residues Met-1 to Leu-19 show a composition bias toward basic residues. The tract at residues Met-1–Gly-23 is disordered.

The protein belongs to the bacterial ribosomal protein bS18 family. Part of the 30S ribosomal subunit.

It is found in the plastid. It localises to the chloroplast. This Acorus calamus (Sweet flag) protein is Small ribosomal subunit protein bS18c.